A 210-amino-acid chain; its full sequence is ATP-dependent dethiobiotin synthetase BioD (210 aa).

13 to 18 (GIGKTV) provides a ligand contact to ATP. Threonine 17 contributes to the Mg(2+) binding site. The active site involves lysine 33. A Mg(2+)-binding site is contributed by glutamate 101. ATP is bound by residues 101 to 104 (EGAG) and 185 to 187 (PWL).

This sequence belongs to the dethiobiotin synthetase family. In terms of assembly, homodimer. Requires Mg(2+) as cofactor.

It is found in the cytoplasm. The catalysed reaction is (7R,8S)-7,8-diammoniononanoate + CO2 + ATP = (4R,5S)-dethiobiotin + ADP + phosphate + 3 H(+). It functions in the pathway cofactor biosynthesis; biotin biosynthesis; biotin from 7,8-diaminononanoate: step 1/2. Its function is as follows. Catalyzes a mechanistically unusual reaction, the ATP-dependent insertion of CO2 between the N7 and N8 nitrogen atoms of 7,8-diaminopelargonic acid (DAPA, also called 7,8-diammoniononanoate) to form a ureido ring. This Bradyrhizobium sp. (strain BTAi1 / ATCC BAA-1182) protein is ATP-dependent dethiobiotin synthetase BioD.